The primary structure comprises 152 residues: Protein SprT-like (152 aa).

Residues 7–147 enclose the SprT-like domain; it reads QRLVEEVSLQ…CGKCKGKLKP (141 aa). Position 67 (histidine 67) interacts with Zn(2+). Glutamate 68 is a catalytic residue. Histidine 71 is a binding site for Zn(2+).

Belongs to the SprT family. The cofactor is Zn(2+).

The protein resides in the cytoplasm. This Bacillus cereus (strain B4264) protein is Protein SprT-like.